We begin with the raw amino-acid sequence, 746 residues long: MMWESESDGGVGVGGGGGREYGDGVLSSNKHGGVKTDGFELRGQSWFVATDIPSDLLVKIGDMNFHLHKYPLLSRSGKMNRLIYESRDPDPTILILDDLPGGPEAFELASKFCYGVPVDLTATNISGLRCAAEYLEMTEDLEEGNLIFKTEAFLSYVVLSSWRDSILVLKSCEKLSPWAENLQIVRRCSESIAWKACSNPKGIRWAYTGKAPSPSTTNFAGSSPRWNESKDSSFYCSPSRNTNSQPVPPDWWFEDVSILRIDHFVRVITAIKVKGMRFELLGAVIMHYAGKWLPGLIKEGGVAIAPAMSSAIGGGLGLGGDEMSISCGSNSSGGSSGPDWKGGLHMVLSAGKTNGHQDSVACLAGLGISPKDQRMIVESLISIIPPQKDSVTCSFLLRLLRAANMLKVAPALITELEKRVGMQFEQATLQDLLIPGYNNKGETMYDVDLVQRLLEHFLVQEQTEGSSPSRMSPSPSQSMYADIPRGNNNNGGGGGGNNQNAKMRVARLVDSYLTEVARDRNLPLTKFQVLAEALPESARTCDDGLYRAIDSYLKAHPTLSEHERKRLCRVMDCQKLSMDACMHAAQNERLPLRVVVQVLFSEQVKISNALANTSLKESTTLGEAMGTYQPMIPNRKTLIEATPQSFQEGWAAAKKDINTLKFELETVKTKYVELQNEMEVMQRQFEKTGKVKNTPSSSAWTSGWKKLSKLTKMSGQESHDISSGGEQAGVDHPPPRKPRRWRNSIS.

The segment at 1 to 24 is disordered; that stretch reads MMWESESDGGVGVGGGGGREYGDG. A compositionally biased stretch (gly residues) spans 9–19; it reads GGVGVGGGGGR. The BTB domain maps to 54 to 122; that stretch reads SDLLVKIGDM…CYGVPVDLTA (69 aa). In terms of domain architecture, NPH3 spans 250–605; sequence DWWFEDVSIL…VQVLFSEQVK (356 aa). The interval 461-500 is disordered; it reads EQTEGSSPSRMSPSPSQSMYADIPRGNNNNGGGGGGNNQN. Low complexity predominate over residues 466–478; it reads SSPSRMSPSPSQS. At Tyr546 the chain carries Phosphotyrosine. Residues 708–746 are disordered; sequence SKLTKMSGQESHDISSGGEQAGVDHPPPRKPRRWRNSIS. Over residues 735–746 the composition is skewed to basic residues; that stretch reads PRKPRRWRNSIS.

It belongs to the NPH3 family. Interacts with PKS1, PKS2, RPT2, PHOT1 and PHOT2. Subunit of a complex made of CAR6, PHOT1 and RPT3/NPH3. Post-translationally, phosphorylated in the dark. In terms of tissue distribution, expressed in hypocotyls, guard cells and mesophyll cells.

Its subcellular location is the cell membrane. Its pathway is protein modification; protein ubiquitination. In terms of biological role, may act as a substrate-specific adapter of an E3 ubiquitin-protein ligase complex (CUL3-RBX1-BTB) which mediates the ubiquitination and subsequent proteasomal degradation of target proteins. Signal transducer of the phototropic response and photo-induced movements. Involved in the phot1 pathway under low blue light (LBL) fluence rate and in the phot2 pathway under higher fluence rate of blue light (HBL). Necessary for root and hypocotyl phototropisms, but not for the regulation of stomata opening. Not involved in chloroplast accumulation and translocation. In Arabidopsis thaliana (Mouse-ear cress), this protein is Root phototropism protein 3 (RPT3).